Here is a 535-residue protein sequence, read N- to C-terminus: Interferon lambda receptor 1 (535 aa).

The N-terminal stretch at 1-20 (MWRADRWAPLLLFLLQSALG) is a signal peptide. The Extracellular portion of the chain corresponds to 21-227 (RPRLAPPRNV…FLEAPGDKRA (207 aa)). The region spanning 26 to 121 (PPRNVTLFSQ…ESRYLEYLFD (96 aa)) is the Fibronectin type-III domain. 3 N-linked (GlcNAc...) asparagine glycosylation sites follow: asparagine 29, asparagine 36, and asparagine 52. 3 disulfide bridges follow: cysteine 73–cysteine 81, cysteine 85–cysteine 149, and cysteine 194–cysteine 216. Asparagine 141 carries N-linked (GlcNAc...) asparagine glycosylation. A helical transmembrane segment spans residues 228–248 (VLAMPSLLLLLIAAVAAGVAW). The Cytoplasmic segment spans residues 249–535 (KIMKGNPWFQ…GRMLGDYLVR (287 aa)). 2 disordered regions span residues 301–419 (NRPA…APCG) and 478–520 (VNNP…SSVQ). Acidic residues predominate over residues 321 to 336 (STEDEDEDTDYDDDGD). Positions 350–360 (EKPRVMEHSET) are enriched in basic and acidic residues. Residues 376–396 (GSDGSSAWDSSDRSWSSTGDS) show a composition bias toward low complexity. Basic and acidic residues predominate over residues 397–414 (SYKDEVGSSSCLDRKEPD). Residues 482–503 (EGEEEQEDEEEEEEEEEEEDWE) show a composition bias toward acidic residues.

It belongs to the type II cytokine receptor family. Heterodimer with IL10RB. Ubiquitinated by FBXO45-containing E3 ligase leading to proteasomal degradation.

It is found in the membrane. Functionally, the IFNLR1/IL10RB dimer is a receptor for the cytokine ligands IFNL2 and IFNL3 and mediates their antiviral activity. The ligand/receptor complex stimulate the activation of the JAK/STAT signaling pathway leading to the expression of IFN-stimulated genes (ISG), which contribute to the antiviral state. Determines the cell type specificity of the lambda interferon action. Shows a more restricted pattern of expression in the epithelial tissues thereby limiting responses to lambda interferons primarily to epithelial cells of the respiratory, gastrointestinal, and reproductive tracts. Seems not to be essential for early virus-activated host defense in vaginal infection, but plays an important role in Toll-like receptor (TLR)-induced antiviral defense. Plays a significant role in the antiviral immune defense in the intestinal epithelium. The protein is Interferon lambda receptor 1 (Ifnlr1) of Mus musculus (Mouse).